Here is a 552-residue protein sequence, read N- to C-terminus: Arginine--tRNA ligase (552 aa).

A 'HIGH' region motif is present at residues 130–140; sequence ANPTGPIHLGG.

The protein belongs to the class-I aminoacyl-tRNA synthetase family. Monomer.

It is found in the cytoplasm. The catalysed reaction is tRNA(Arg) + L-arginine + ATP = L-arginyl-tRNA(Arg) + AMP + diphosphate. The chain is Arginine--tRNA ligase from Nocardia farcinica (strain IFM 10152).